The chain runs to 72 residues: Translation initiation factor IF-1 (72 aa).

Positions 1–72 constitute an S1-like domain; that stretch reads MSKDDVIQMQ…SRARIVFRAK (72 aa).

The protein belongs to the IF-1 family. Component of the 30S ribosomal translation pre-initiation complex which assembles on the 30S ribosome in the order IF-2 and IF-3, IF-1 and N-formylmethionyl-tRNA(fMet); mRNA recruitment can occur at any time during PIC assembly.

The protein localises to the cytoplasm. Its function is as follows. One of the essential components for the initiation of protein synthesis. Stabilizes the binding of IF-2 and IF-3 on the 30S subunit to which N-formylmethionyl-tRNA(fMet) subsequently binds. Helps modulate mRNA selection, yielding the 30S pre-initiation complex (PIC). Upon addition of the 50S ribosomal subunit IF-1, IF-2 and IF-3 are released leaving the mature 70S translation initiation complex. This chain is Translation initiation factor IF-1, found in Albidiferax ferrireducens (strain ATCC BAA-621 / DSM 15236 / T118) (Rhodoferax ferrireducens).